An 807-amino-acid polypeptide reads, in one-letter code: Ribosome-releasing factor 2, mitochondrial (807 aa).

The N-terminal 18 residues, 1 to 18 (MFCRKYVFQTWKQLSRSY), are a transit peptide targeting the mitochondrion. In terms of domain architecture, tr-type G spans 27–315 (AKTRNIGIIA…GITKYLPSPL (289 aa)). Residues 36–43 (AHIDAGKT), 100–104 (DTPGH), and 154–157 (NKMD) contribute to the GTP site.

It belongs to the TRAFAC class translation factor GTPase superfamily. Classic translation factor GTPase family. EF-G/EF-2 subfamily.

It is found in the mitochondrion. Mitochondrial GTPase that mediates the disassembly of ribosomes from messenger RNA at the termination of mitochondrial protein biosynthesis. Not involved in the GTP-dependent ribosomal translocation step during translation elongation. This is Ribosome-releasing factor 2, mitochondrial from Candida albicans (strain SC5314 / ATCC MYA-2876) (Yeast).